A 448-amino-acid chain; its full sequence is MKKLYIKTFGCQMNEYDSGKMADLLHADEGMVMTDRPEDADVVLLNTCSIREKAEDKVFSDLGRLRELKKTKPNLLIGVGGCVASQEGQQIVSHAPYVDVVFGPQTLHRLSDLIAKRRETGLFQVDISFPEIEKFDHLPASRQTRGSAYVSIMEGCSKYCSYCVVPYTRGEEVSRSFDDVLTEVAGLASKGVKEIVLLGQNVNAYLGKMGDRQEIADFALLIEYIVEIPGVERIRFTTSHPKEFTQRLIDVYTKVPKLVSHLHLPVQHGSDAMLSAMKRGYTALEFKSIIRKMRAVRPDLTLSSDFIVGFPGETEADFEKLLKMVEELNFDNSFCFIFSPRPGTPAANLHDDTPYEVKLKRLQTLLALVESQANQISQKMLGNIERVLIEGLAKDGINLQGRAENNRVIHFTAPAQNIENLIGQMVDIRITEVLNYTLRGKLVEAYVH.

The region spanning 2-119 is the MTTase N-terminal domain; that stretch reads KKLYIKTFGC…LSDLIAKRRE (118 aa). [4Fe-4S] cluster contacts are provided by Cys11, Cys48, Cys82, Cys156, Cys160, and Cys163. One can recognise a Radical SAM core domain in the interval 142-377; it reads RQTRGSAYVS…LVESQANQIS (236 aa). Positions 378-444 constitute a TRAM domain; that stretch reads QKMLGNIERV…NYTLRGKLVE (67 aa).

The protein belongs to the methylthiotransferase family. MiaB subfamily. In terms of assembly, monomer. [4Fe-4S] cluster serves as cofactor.

It is found in the cytoplasm. The enzyme catalyses N(6)-dimethylallyladenosine(37) in tRNA + (sulfur carrier)-SH + AH2 + 2 S-adenosyl-L-methionine = 2-methylsulfanyl-N(6)-dimethylallyladenosine(37) in tRNA + (sulfur carrier)-H + 5'-deoxyadenosine + L-methionine + A + S-adenosyl-L-homocysteine + 2 H(+). Its function is as follows. Catalyzes the methylthiolation of N6-(dimethylallyl)adenosine (i(6)A), leading to the formation of 2-methylthio-N6-(dimethylallyl)adenosine (ms(2)i(6)A) at position 37 in tRNAs that read codons beginning with uridine. This Polynucleobacter necessarius subsp. necessarius (strain STIR1) protein is tRNA-2-methylthio-N(6)-dimethylallyladenosine synthase.